Here is a 348-residue protein sequence, read N- to C-terminus: Phenylalanine--tRNA ligase alpha subunit (348 aa).

Position 262 (glutamate 262) interacts with Mg(2+).

Belongs to the class-II aminoacyl-tRNA synthetase family. Phe-tRNA synthetase alpha subunit type 1 subfamily. Tetramer of two alpha and two beta subunits. Mg(2+) serves as cofactor.

It localises to the cytoplasm. The enzyme catalyses tRNA(Phe) + L-phenylalanine + ATP = L-phenylalanyl-tRNA(Phe) + AMP + diphosphate + H(+). The sequence is that of Phenylalanine--tRNA ligase alpha subunit from Streptococcus pneumoniae (strain 70585).